A 487-amino-acid polypeptide reads, in one-letter code: MKLEEKLEHNESLVGKSRPCLHDTHQANGKPIANGNPTANGKVEVYEKQEANGKGNRLGKCLNLYTWQEIQRHSQEADQWLVIDRKVYNVTDWAGKHPGGRRVLNHYAGQDATDAFRAMHLDLGMVKLYLKPLLIGELSPEEPSQEKNKNAQLVEDFRELRKTLEAMNMFSANLRFFFLHLAQILILEISAWLILHHFGSSWLVTILISFLLTVSQAQCSFLQHDLGHLSMFKKSKWNHLMHKFVMCHLKGLSADWWNYRHFQHHVKPNIYPKDPDIDVGPLFLVGDTQPIKYGKKKIKYIDYEKQHLYFYMVALPFLMPVYFNLQSMQVMYLRKYWMDIAWVSSFYIRYFITFGPFYGIFGTVLLIYLVKFIESPWIAYVTQMSHIPMKMSSEENHDWLSTQVVATCNIEQSFFNDWFTGHLNFQIEHHLFPTMPRHNYHKVAPLVKSLCAKHGLQYINKPILKAFGDIVRSLKKSASLWMNAYYE.

The segment covering 1–11 (MKLEEKLEHNE) has biased composition (basic and acidic residues). The segment at 1–20 (MKLEEKLEHNESLVGKSRPC) is disordered. The Cytoplasmic segment spans residues 1-175 (MKLEEKLEHN…AMNMFSANLR (175 aa)). The Cytochrome b5 heme-binding domain occupies 62–139 (LNLYTWQEIQ…LKPLLIGELS (78 aa)). 2 residues coordinate heme: His-97 and His-120. Residues 176–196 (FFFLHLAQILILEISAWLILH) form a helical membrane-spanning segment. Residues 197-201 (HFGSS) are Lumenal-facing. A helical transmembrane segment spans residues 202–222 (WLVTILISFLLTVSQAQCSFL). The Cytoplasmic portion of the chain corresponds to 223 to 307 (QHDLGHLSMF…IKYIDYEKQH (85 aa)). Positions 224–228 (HDLGH) match the Histidine box-1 motif. The Histidine box-2 motif lies at 261-265 (HFQHH). Residues 308-328 (LYFYMVALPFLMPVYFNLQSM) form a helical membrane-spanning segment. Topologically, residues 329-349 (QVMYLRKYWMDIAWVSSFYIR) are lumenal. Residues 350-370 (YFITFGPFYGIFGTVLLIYLV) traverse the membrane as a helical segment. The Cytoplasmic portion of the chain corresponds to 371-487 (KFIESPWIAY…ASLWMNAYYE (117 aa)). Residues 426–430 (QIEHH) carry the Histidine box-3 motif.

Belongs to the fatty acid desaturase type 1 family.

It is found in the endoplasmic reticulum membrane. The protein operates within lipid metabolism; polyunsaturated fatty acid biosynthesis. This chain is Fatty acid desaturase 2-like protein FADS2B, found in Mus musculus (Mouse).